Reading from the N-terminus, the 217-residue chain is Translation initiation factor IF-3 (217 aa).

Positions 170–217 (KKTEAMAEARQAQEARKADAKANPGKSQNAAETDDAEAEAPAEAPAEA) are disordered. The segment covering 172–189 (TEAMAEARQAQEARKADA) has biased composition (basic and acidic residues).

This sequence belongs to the IF-3 family. Monomer.

The protein localises to the cytoplasm. In terms of biological role, IF-3 binds to the 30S ribosomal subunit and shifts the equilibrium between 70S ribosomes and their 50S and 30S subunits in favor of the free subunits, thus enhancing the availability of 30S subunits on which protein synthesis initiation begins. This is Translation initiation factor IF-3 from Streptomyces coelicolor (strain ATCC BAA-471 / A3(2) / M145).